The chain runs to 1203 residues: Plasma membrane calcium-transporting ATPase 4 (1203 aa).

At 1–92 (MTNPSGHNLP…NMIPPKKPKT (92 aa)) the chain is on the cytoplasmic side. At Ser-13 the chain carries Phosphoserine. A helical membrane pass occupies residues 93–113 (FLELVWEALQDVTLIILEIAA). The Extracellular portion of the chain corresponds to 114-150 (IISLVLSFYRPPGGENEICGHIVSNPEEDEEGETGWI). A helical transmembrane segment spans residues 151–171 (EGAAILASVIIVVFVTAFNDW). Topologically, residues 172-356 (SKEKQFRGLQ…KEKSVLQGKL (185 aa)) are cytoplasmic. A disordered region spans residues 294-319 (DDEKKKKGKKQGVSENRNKAKTQDGV). Residues Ser-328 and Ser-334 each carry the phosphoserine modification. The disordered stretch occupies residues 330–349 (EGLDSEEKEKKASKGPKKEK). The span at 334–349 (SEEKEKKASKGPKKEK) shows a compositional bias: basic and acidic residues. A helical membrane pass occupies residues 357–376 (TRLAVQIGKAGLIMSILTVL). The Extracellular segment spans residues 377-409 (ILILYFVVDNFVIQRRAWLPECTPVYIQYFVKF). The chain crosses the membrane as a helical span at residues 410 to 427 (FIIGVTVLVVAVPEGLPL). Residues 428–840 (AVTISLAYSV…MWGRNVYDSI (413 aa)) are Cytoplasmic-facing. Asp-465 functions as the 4-aspartylphosphate intermediate in the catalytic mechanism. Mg(2+) is bound by residues Asp-785 and Asp-789. A helical membrane pass occupies residues 841–860 (SKFLQFQLTVNVVAVIVAFS). Topologically, residues 861–870 (GACITQDSPL) are extracellular. Residues 871-891 (KAVQMLWVNLIMDTFASLALA) form a helical membrane-spanning segment. Over 892-911 (TEPPTDSLLRRRPYGRNKPL) the chain is Cytoplasmic. A helical transmembrane segment spans residues 912-934 (ISRTMMKNILGHAVYQLGIVFLL). Topologically, residues 935 to 952 (VFAGDKLFDIDSGRKAPL) are extracellular. The chain crosses the membrane as a helical span at residues 953 to 974 (NSPPSQHYTIVFNTFVLMQLFN). Residues 975–993 (EINSRKIHGEKNVFAGVYR) are Cytoplasmic-facing. A helical transmembrane segment spans residues 994–1015 (NIIFCSVVLGTFFCQILIVEVG). Topologically, residues 1016 to 1025 (GKPFSCTNLT) are extracellular. A helical membrane pass occupies residues 1026-1047 (MEQWMWCLFIGIGELLWGQVIS). The Cytoplasmic portion of the chain corresponds to 1048–1203 (AIPTKSLKFL…SPLQSQETPV (156 aa)). A phosphoserine mark is found at Ser-1064 and Ser-1070. The tract at residues 1086–1103 (LRRGQILWVRGLNRIQTQ) is calmodulin-binding subdomain A. At Thr-1102 the chain carries Phosphothreonine; by PKC. At Gln-1103 the chain carries Phosphoserine. A calmodulin-binding subdomain B region spans residues 1104-1113 (IRVVKVFHSF). Residues Arg-1114, Asp-1115, Ile-1126, and Ser-1144 each carry the phosphoserine modification.

Belongs to the cation transport ATPase (P-type) (TC 3.A.3) family. Type IIB subfamily. In terms of assembly, interacts with PDZD11. Interacts with SLC35G1 and STIM1. Interacts with calmodulin. In terms of tissue distribution, ubiquitously expressed. Not detected in liver. The highest levels are found in uterus and stomach. Isoform XA is found in uterus, brain, stomach, small intestine, colon and pancreas. Isoform XB is found in uterus, skeletal muscle, lung, kidney, spleen, stomach, small intestine and pancreas. Isoform ZA is found in testis and isoform ZB is found in testis and heart.

The protein resides in the cell membrane. The protein localises to the cell projection. It localises to the cilium. It is found in the flagellum membrane. It carries out the reaction Ca(2+)(in) + ATP + H2O = Ca(2+)(out) + ADP + phosphate + H(+). Activated by calcium/calmodulin. Calcium/calmodulin-regulated and magnesium-dependent enzyme that catalyzes the hydrolysis of ATP coupled with the transport of calcium out of the cell. By regulating sperm cell calcium homeostasis, may play a role in sperm motility. This chain is Plasma membrane calcium-transporting ATPase 4, found in Rattus norvegicus (Rat).